Here is a 234-residue protein sequence, read N- to C-terminus: uncharacterized protein (234 aa).

Positions 62-99 (NEESISDLNSDNPGNSEPSDVESFVLSDEDENSEKDFS) are disordered. Residues 67–79 (SDLNSDNPGNSEP) are compositionally biased toward polar residues.

This is an uncharacterized protein from Acanthamoeba polyphaga (Amoeba).